A 236-amino-acid chain; its full sequence is UPF0502 protein Bpro_3844 (236 aa).

The protein belongs to the UPF0502 family.

This is UPF0502 protein Bpro_3844 from Polaromonas sp. (strain JS666 / ATCC BAA-500).